A 456-amino-acid polypeptide reads, in one-letter code: MKKIDEYQGKKVLVMGFGISGINAAHLLVKLGANVTANDKATPKNNDIVDDLEADGIKVITGDNPISLANEGFDVVVKNPGIPYDNPLVAAFVKQGTPIITEAELGWQIFDGHLVSVTGSNGKTTTTTLTQLMIAENAKHQVKYAGNIGISFSKIAEDLGPDDTLVTELSSFQLLGAPTIHPHIAIITNIFSNHLDYHKTRENYINAKLNITRNQTKDDFLVINWDRDEWQKIAQRSQATIVPFSRLNKSHEGSYVEDGMIYWRGQEVMPTKDIRLIGPQNVENALAAIAAAKLSGVTNDAIKKVLTTFSGVRHRLQYVMEYQERLFYNDSKSTDIEATEVALQGFDRPVILLAGGLDRGYTFERLVPYFKKHVKAMIVFGECKDKMKDAGNQAGVPVVESENAITAVPEAWKLSEPGDVILLSPANASWDQFPSFEVRGDKFIEAVEELTGKKEQ.

An ATP-binding site is contributed by 119-125 (GSNGKTT).

This sequence belongs to the MurCDEF family.

The protein localises to the cytoplasm. It catalyses the reaction UDP-N-acetyl-alpha-D-muramoyl-L-alanine + D-glutamate + ATP = UDP-N-acetyl-alpha-D-muramoyl-L-alanyl-D-glutamate + ADP + phosphate + H(+). It functions in the pathway cell wall biogenesis; peptidoglycan biosynthesis. Its function is as follows. Cell wall formation. Catalyzes the addition of glutamate to the nucleotide precursor UDP-N-acetylmuramoyl-L-alanine (UMA). The protein is UDP-N-acetylmuramoylalanine--D-glutamate ligase of Limosilactobacillus reuteri (strain DSM 20016) (Lactobacillus reuteri).